The chain runs to 304 residues: Probable endonuclease 4 (304 aa).

Residues His75, His115, Glu151, Asp185, His188, His221, Asp234, His236, and Glu266 each contribute to the Zn(2+) site.

This sequence belongs to the AP endonuclease 2 family. Zn(2+) is required as a cofactor.

It carries out the reaction Endonucleolytic cleavage to 5'-phosphooligonucleotide end-products.. In terms of biological role, endonuclease IV plays a role in DNA repair. It cleaves phosphodiester bonds at apurinic or apyrimidinic (AP) sites, generating a 3'-hydroxyl group and a 5'-terminal sugar phosphate. This is Probable endonuclease 4 from Ureaplasma urealyticum serovar 10 (strain ATCC 33699 / Western).